A 115-amino-acid polypeptide reads, in one-letter code: MKNKFVELVEKSQLRTDLPEFNPGDSITVNLWIKEGDKQRIQAFKGFVLRKRNRGLHSAFTVRKMSSGVGVERTFQTHSPLIDSIIVEKRADVRRAKLYYMRGLTGKAARIKEKV.

The protein belongs to the bacterial ribosomal protein bL19 family.

Functionally, this protein is located at the 30S-50S ribosomal subunit interface and may play a role in the structure and function of the aminoacyl-tRNA binding site. This is Large ribosomal subunit protein bL19 from Francisella tularensis subsp. tularensis (strain WY96-3418).